Consider the following 989-residue polypeptide: Translation initiation factor IF-2 (989 aa).

Disordered stretches follow at residues 28-60 (GVTK…TDAD) and 97-397 (VRRD…DQNT). Composition is skewed to basic and acidic residues over residues 40-60 (ETDK…TDAD) and 122-178 (ELQR…EAAK). Low complexity predominate over residues 182 to 223 (AAAAEAAAREQQTQASKPAQAAQPAAAKAEPVAAKAAEPVVA). The segment covering 231–280 (ERAAAERAAQREAAKKAEDAARQAAEKARAEQEEIAKRRAAAEAEARAIR) has biased composition (basic and acidic residues). Over residues 318–345 (RPAGEAPARPAAKKPAAAAPAATTTPSA) the composition is skewed to low complexity. Positions 374–387 (TSGGVDRGWRGGPK) are enriched in gly residues. In terms of domain architecture, tr-type G spans 489-658 (PRPPVVTVMG…LLQAEVLELK (170 aa)). The tract at residues 498-505 (GHVDHGKT) is G1. Residue 498–505 (GHVDHGKT) coordinates GTP. Positions 523–527 (GITQH) are G2. Positions 544–547 (DTPG) are G3. GTP is bound by residues 544 to 548 (DTPGH) and 598 to 601 (NKID). Residues 598-601 (NKID) form a G4 region. The interval 634–636 (SAK) is G5.

It belongs to the TRAFAC class translation factor GTPase superfamily. Classic translation factor GTPase family. IF-2 subfamily.

Its subcellular location is the cytoplasm. In terms of biological role, one of the essential components for the initiation of protein synthesis. Protects formylmethionyl-tRNA from spontaneous hydrolysis and promotes its binding to the 30S ribosomal subunits. Also involved in the hydrolysis of GTP during the formation of the 70S ribosomal complex. This is Translation initiation factor IF-2 from Paraburkholderia xenovorans (strain LB400).